Here is a 592-residue protein sequence, read N- to C-terminus: LIM domain-binding protein 1 (592 aa).

Disordered stretches follow at residues 14–41 and 305–368; these read GHPPPFAGPESSNSHYGMPPSQGTNSQN and PAPE…NPMT. The segment covering 23–41 has biased composition (polar residues); it reads ESSNSHYGMPPSQGTNSQN. A compositionally biased stretch (low complexity) spans 322–344; the sequence is PAANPRGSKKATAAAAAAAAAAT. A compositionally biased stretch (polar residues) spans 352–368; the sequence is PTASPANNQQFPPNPMT. In terms of domain architecture, LIM interaction domain (LID) spans 378-417; the sequence is DVMVVGEPSMMGSEFGENDERTISRVENSQYDPNAMQMQS. Disordered regions lie at residues 437-458 and 559-592; these read HHPGMQPPPGQQHMPPHSMGSQ and GGMQMNQMPPPNYSQYTGGPPPQWPPPNSAMITG. Positions 577–586 are enriched in pro residues; the sequence is GPPPQWPPPN.

Belongs to the LDB family. In terms of assembly, interacts with blmp-1. As to expression, expressed in all neurons and some other tissues of the adult, including vulval muscle, and, in males, all the neurons of the tail region. Expressed in vulval cells.

In terms of biological role, binds to the LIM domain of LIM domain-containing transcription factors. Required for the blmp-1-mediated transcriptional activation or repression of several hypodermal genes, such as bed-3. Regulates sam-10 nuclear localization in PLM neurons. Has a role in synaptic differentiation of PLM mechanosensory neurons. Involved in gonadogenesis. This Caenorhabditis elegans protein is LIM domain-binding protein 1.